The primary structure comprises 392 residues: L-rhamnonate dehydratase (392 aa).

Positions 22 and 48 each coordinate substrate. Mg(2+) is bound by residues Asp214, Glu240, and Glu268. His318 (proton acceptor) is an active-site residue. Glu338 contributes to the substrate binding site.

The protein belongs to the mandelate racemase/muconate lactonizing enzyme family. RhamD subfamily. In terms of assembly, homooctamer; tetramer of dimers. Requires Mg(2+) as cofactor.

The enzyme catalyses L-rhamnonate = 2-dehydro-3-deoxy-L-rhamnonate + H2O. Catalyzes the dehydration of L-rhamnonate to 2-keto-3-deoxy-L-rhamnonate (KDR). This is L-rhamnonate dehydratase from Burkholderia cenocepacia (strain HI2424).